Reading from the N-terminus, the 157-residue chain is MFEVLIYLFETYVHSGSEISIDYKNLTSDLSDIGFRSKDIYKALHWLKNLSCCKKNIFSSINLSLNHTTNRIYTKKEEFKLNSDCRGFILFLEELEILTLNTREIIIERIMALDISHVNIEDLKWIVLIILFNIPGCEVVYRKLENLLFNFKKEIVH.

The protein belongs to the Smg family.

The chain is Protein Smg from Buchnera aphidicola subsp. Schizaphis graminum (strain Sg).